Reading from the N-terminus, the 251-residue chain is CDP-diacylglycerol pyrophosphatase (251 aa).

The helical transmembrane segment at 4–24 (AGLLFLVMIVIAVVAAGIGYW) threads the bilayer.

Belongs to the Cdh family.

The protein resides in the cell inner membrane. The catalysed reaction is a CDP-1,2-diacyl-sn-glycerol + H2O = a 1,2-diacyl-sn-glycero-3-phosphate + CMP + 2 H(+). It functions in the pathway phospholipid metabolism; CDP-diacylglycerol degradation; phosphatidate from CDP-diacylglycerol: step 1/1. The polypeptide is CDP-diacylglycerol pyrophosphatase (Escherichia coli (strain ATCC 8739 / DSM 1576 / NBRC 3972 / NCIMB 8545 / WDCM 00012 / Crooks)).